Consider the following 1149-residue polypeptide: Transforming acidic coiled-coil-containing protein 2 (1149 aa).

Disordered stretches follow at residues 1–73, 91–227, and 247–430; these read MGNE…GSNQ, SASP…ASSG, and PCSA…VPLT. Positions 13–35 are enriched in polar residues; the sequence is TSSVQSPRSLQPPGKSQSLQKQQ. Over residues 91–106 the composition is skewed to low complexity; it reads SASPSAARASPAPLAP. Ser-100 carries the post-translational modification Phosphoserine. Over residues 155-180 the composition is skewed to pro residues; the sequence is KAPPAPPPPPPEVTPEPEVIDPPAPE. A Phosphoserine modification is found at Ser-265. Composition is skewed to polar residues over residues 267–284 and 300–317; these read ESVPPSKSTLSRSLSLQA and TLTTDACGTGSNSASSTL. The span at 318 to 334 shows a compositional bias: basic residues; the sequence is KRTKKTRPPSLKKKQAT. The residue at position 354 (Ser-354) is a Phosphoserine. Positions 358-368 are enriched in basic and acidic residues; that stretch reads SEEHLAPETKT. A Phosphoserine modification is found at Ser-419. Thr-439 carries the post-translational modification Phosphothreonine. Positions 463–617 are disordered; that stretch reads SEDKGSWESQ…PAKKKKTPLK (155 aa). A compositionally biased stretch (basic residues) spans 481–498; that stretch reads KIGKKPVAKMPLRRPKMK. The region spanning 508–596 is the SPAZ domain; it reads PASPPRSPTE…SPASFEIPAS (89 aa). Residues Ser-510 and Ser-514 each carry the phosphoserine modification. Residue Thr-516 is modified to Phosphothreonine. A compositionally biased stretch (polar residues) spans 541–561; the sequence is NPFSSTSKMQESPKLSQQSYN. A phosphoserine mark is found at Ser-552, Ser-582, Ser-585, Ser-587, and Ser-596. Residues 575–590 are compositionally biased toward low complexity; that stretch reads KASSKTPSSPSKSPAS. 3 positions are modified to phosphothreonine: Thr-632, Thr-653, and Thr-657. Disordered regions lie at residues 636–665 and 696–719; these read KKSPKRSPLSDPPSQDPTPAATPEAPSAIS and DFPQPSDLSNFVNETKFNSPSEEL. Low complexity predominate over residues 652–665; that stretch reads PTPAATPEAPSAIS. The span at 701–716 shows a compositional bias: polar residues; it reads SDLSNFVNETKFNSPS. Phosphoserine is present on residues Ser-714 and Ser-736. Thr-755 is modified (phosphothreonine). Positions 756-780 are disordered; sequence PQESPVKSPPVRMSDSPTPCSGSSF. 2 positions are modified to phosphoserine: Ser-759 and Ser-771. Polar residues predominate over residues 770–780; it reads DSPTPCSGSSF. Coiled coils occupy residues 877–905 and 948–1148; these read AQKLQEELEFAVMRIEALKLARQIALASR and DLDS…KMGK.

It belongs to the TACC family. Interacts with microtubules. Interacts with YEATS4, GCN5L2 and PCAF. Interacts with CCDC100/CEP120. Phosphorylated; which is required for localization in centrosome. Expressed in brain, kidney, lung, thymus and ovary. Not detectable in normal tissues at protein level.

Its subcellular location is the cytoplasm. It is found in the nucleus. The protein localises to the cytoskeleton. The protein resides in the microtubule organizing center. It localises to the centrosome. In terms of biological role, plays a role in the microtubule-dependent coupling of the nucleus and the centrosome. Involved in the processes that regulate centrosome-mediated interkinetic nuclear migration (INM) of neural progenitors. May play a role in organizing centrosomal microtubules. This Mus musculus (Mouse) protein is Transforming acidic coiled-coil-containing protein 2 (Tacc2).